Here is a 70-residue protein sequence, read N- to C-terminus: Dermaseptin-H3 (70 aa).

An N-terminal signal peptide occupies residues 1 to 22 (MAFLKKSLFLVLFLGMVSLSIC). Positions 23-43 (EEEKRENEDEELQEDDEQSEM) are excised as a propeptide. The disordered stretch occupies residues 25 to 44 (EKRENEDEELQEDDEQSEMK). Positions 30–40 (EDEELQEDDEQ) are enriched in acidic residues. L70 carries the leucine amide modification.

Expressed by the skin glands.

The protein resides in the secreted. Has antibacterial activity against the Gram-negative bacteria E.coli and P.aeruginosa, and the Gram-positive bacteria S.aureus and M.luteus. Has antiprotozoal activity against L.amazonensis. No hemolytic activity. This chain is Dermaseptin-H3, found in Pithecopus hypochondrialis (Orange-legged leaf frog).